A 152-amino-acid chain; its full sequence is SsrA-binding protein (152 aa).

It belongs to the SmpB family.

The protein localises to the cytoplasm. Its function is as follows. Required for rescue of stalled ribosomes mediated by trans-translation. Binds to transfer-messenger RNA (tmRNA), required for stable association of tmRNA with ribosomes. tmRNA and SmpB together mimic tRNA shape, replacing the anticodon stem-loop with SmpB. tmRNA is encoded by the ssrA gene; the 2 termini fold to resemble tRNA(Ala) and it encodes a 'tag peptide', a short internal open reading frame. During trans-translation Ala-aminoacylated tmRNA acts like a tRNA, entering the A-site of stalled ribosomes, displacing the stalled mRNA. The ribosome then switches to translate the ORF on the tmRNA; the nascent peptide is terminated with the 'tag peptide' encoded by the tmRNA and targeted for degradation. The ribosome is freed to recommence translation, which seems to be the essential function of trans-translation. The protein is SsrA-binding protein of Rickettsia peacockii (strain Rustic).